Consider the following 355-residue polypeptide: 3-dehydroquinate synthase (355 aa).

NAD(+) contacts are provided by residues 71 to 76 (EGEERK), 105 to 109 (GVVGD), 129 to 130 (TS), K142, and K151. Zn(2+) is bound by residues E184, H246, and H263.

The protein belongs to the sugar phosphate cyclases superfamily. Dehydroquinate synthase family. Co(2+) is required as a cofactor. It depends on Zn(2+) as a cofactor. The cofactor is NAD(+).

It localises to the cytoplasm. The enzyme catalyses 7-phospho-2-dehydro-3-deoxy-D-arabino-heptonate = 3-dehydroquinate + phosphate. The protein operates within metabolic intermediate biosynthesis; chorismate biosynthesis; chorismate from D-erythrose 4-phosphate and phosphoenolpyruvate: step 2/7. Functionally, catalyzes the conversion of 3-deoxy-D-arabino-heptulosonate 7-phosphate (DAHP) to dehydroquinate (DHQ). This is 3-dehydroquinate synthase from Streptococcus pneumoniae (strain ATCC 700669 / Spain 23F-1).